The sequence spans 211 residues: Large ribosomal subunit protein uL3 (211 aa).

Gln150 is modified (N5-methylglutamine).

The protein belongs to the universal ribosomal protein uL3 family. In terms of assembly, part of the 50S ribosomal subunit. Forms a cluster with proteins L14 and L19. Post-translationally, methylated by PrmB.

Its function is as follows. One of the primary rRNA binding proteins, it binds directly near the 3'-end of the 23S rRNA, where it nucleates assembly of the 50S subunit. This is Large ribosomal subunit protein uL3 from Pseudomonas syringae pv. syringae (strain B728a).